The chain runs to 267 residues: Large ribosomal subunit protein uL2c (267 aa).

It belongs to the universal ribosomal protein uL2 family. As to quaternary structure, part of the 50S ribosomal subunit.

The protein localises to the plastid. It localises to the apicoplast. This chain is Large ribosomal subunit protein uL2c (rpl2), found in Toxoplasma gondii.